The primary structure comprises 293 residues: Fructose-bisphosphate aldolase (293 aa).

Position 50 (Ser50) interacts with D-glyceraldehyde 3-phosphate. Residue Asp85 is the Proton donor of the active site. Positions 86, 106, 136, and 178 each coordinate Zn(2+). Gly179 provides a ligand contact to dihydroxyacetone phosphate. His208 contributes to the Zn(2+) binding site. Residues 209–211 (GGS) and 230–233 (NVNT) each bind dihydroxyacetone phosphate.

It belongs to the class II fructose-bisphosphate aldolase family. The cofactor is Zn(2+).

The enzyme catalyses beta-D-fructose 1,6-bisphosphate = D-glyceraldehyde 3-phosphate + dihydroxyacetone phosphate. It functions in the pathway carbohydrate degradation; glycolysis; D-glyceraldehyde 3-phosphate and glycerone phosphate from D-glucose: step 4/4. Its function is as follows. Catalyzes the aldol condensation of dihydroxyacetone phosphate (DHAP or glycerone-phosphate) with glyceraldehyde 3-phosphate (G3P) to form fructose 1,6-bisphosphate (FBP) in gluconeogenesis and the reverse reaction in glycolysis. The chain is Fructose-bisphosphate aldolase (fba) from Streptococcus pyogenes serotype M3 (strain ATCC BAA-595 / MGAS315).